A 635-amino-acid polypeptide reads, in one-letter code: Threonine--tRNA ligase (635 aa).

In terms of domain architecture, TGS spans 1–61; the sequence is MIKITLKDGS…KEDAALELLT (61 aa). The tract at residues 242–532 is catalytic; that stretch reads DHRKLGQELD…LTEHFAGAFP (291 aa). Zn(2+)-binding residues include C333, H384, and H509.

The protein belongs to the class-II aminoacyl-tRNA synthetase family. In terms of assembly, homodimer. It depends on Zn(2+) as a cofactor.

The protein resides in the cytoplasm. It catalyses the reaction tRNA(Thr) + L-threonine + ATP = L-threonyl-tRNA(Thr) + AMP + diphosphate + H(+). Functionally, catalyzes the attachment of threonine to tRNA(Thr) in a two-step reaction: L-threonine is first activated by ATP to form Thr-AMP and then transferred to the acceptor end of tRNA(Thr). Also edits incorrectly charged L-seryl-tRNA(Thr). This Desulforamulus reducens (strain ATCC BAA-1160 / DSM 100696 / MI-1) (Desulfotomaculum reducens) protein is Threonine--tRNA ligase.